Consider the following 124-residue polypeptide: S-adenosylmethionine decarboxylase proenzyme (124 aa).

S70 functions as the Schiff-base intermediate with substrate; via pyruvic acid in the catalytic mechanism. S70 bears the Pyruvic acid (Ser); by autocatalysis mark. Catalysis depends on H75, which acts as the Proton acceptor; for processing activity. Catalysis depends on C90, which acts as the Proton donor; for catalytic activity.

This sequence belongs to the prokaryotic AdoMetDC family. Type 1 subfamily. In terms of assembly, heterotetramer of two alpha and two beta chains arranged as a dimer of alpha/beta heterodimers. The cofactor is pyruvate. Is synthesized initially as an inactive proenzyme. Formation of the active enzyme involves a self-maturation process in which the active site pyruvoyl group is generated from an internal serine residue via an autocatalytic post-translational modification. Two non-identical subunits are generated from the proenzyme in this reaction, and the pyruvate is formed at the N-terminus of the alpha chain, which is derived from the carboxyl end of the proenzyme. The post-translation cleavage follows an unusual pathway, termed non-hydrolytic serinolysis, in which the side chain hydroxyl group of the serine supplies its oxygen atom to form the C-terminus of the beta chain, while the remainder of the serine residue undergoes an oxidative deamination to produce ammonia and the pyruvoyl group blocking the N-terminus of the alpha chain.

It carries out the reaction S-adenosyl-L-methionine + H(+) = S-adenosyl 3-(methylsulfanyl)propylamine + CO2. It participates in amine and polyamine biosynthesis; S-adenosylmethioninamine biosynthesis; S-adenosylmethioninamine from S-adenosyl-L-methionine: step 1/1. Catalyzes the decarboxylation of S-adenosylmethionine to S-adenosylmethioninamine (dcAdoMet), the propylamine donor required for the synthesis of the polyamines spermine and spermidine from the diamine putrescine. In Pyrobaculum neutrophilum (strain DSM 2338 / JCM 9278 / NBRC 100436 / V24Sta) (Thermoproteus neutrophilus), this protein is S-adenosylmethionine decarboxylase proenzyme.